The sequence spans 366 residues: Mitogen-activated protein kinase p38a (366 aa).

Residues 25–312 (YQDLQPVGSG…AEEALSHPYL (288 aa)) form the Protein kinase domain. ATP contacts are provided by residues 31-39 (VGSGAYGQV) and lysine 54. Aspartate 154 acts as the Proton acceptor in catalysis. A Phosphothreonine modification is found at threonine 184. Positions 184 to 186 (TGY) match the TXY motif. Tyrosine 186 carries the phosphotyrosine modification.

The protein belongs to the protein kinase superfamily. CMGC Ser/Thr protein kinase family. MAP kinase subfamily. It depends on Mg(2+) as a cofactor. In terms of processing, dually phosphorylated on Thr-184 and Tyr-186, which activates the enzyme.

It is found in the nucleus. It carries out the reaction L-seryl-[protein] + ATP = O-phospho-L-seryl-[protein] + ADP + H(+). The catalysed reaction is L-threonyl-[protein] + ATP = O-phospho-L-threonyl-[protein] + ADP + H(+). Activated by threonine and tyrosine phosphorylation by Mkk3 in response to environmental stress. Functionally, kinase involved in a signal transduction pathway. May down-regulate insect immunity gene expression after prolonged infection. This chain is Mitogen-activated protein kinase p38a, found in Drosophila melanogaster (Fruit fly).